Consider the following 30-residue polypeptide: Cycloviolacin-O9 (30 aa).

The segment at residues 1-30 is a cross-link (cyclopeptide (Gly-Asn)); sequence GIPCGESCVWIPCLTSAVGCSCKSKVCYRN. Intrachain disulfides connect Cys4/Cys20, Cys8/Cys22, and Cys13/Cys27.

This is a cyclic peptide.

Functionally, probably participates in a plant defense mechanism. This Viola odorata (Sweet violet) protein is Cycloviolacin-O9.